Consider the following 466-residue polypeptide: Glutamate--tRNA ligase 1 (466 aa).

The short motif at 10 to 20 (PSPTGLIHLGN) is the 'HIGH' region element. Zn(2+) contacts are provided by Cys-103, Cys-105, Cys-130, and His-132. A 'KMSKS' region motif is present at residues 247–251 (PLSKR). Lys-250 provides a ligand contact to ATP.

Belongs to the class-I aminoacyl-tRNA synthetase family. Glutamate--tRNA ligase type 1 subfamily. Monomer. It depends on Zn(2+) as a cofactor.

It is found in the cytoplasm. The enzyme catalyses tRNA(Glu) + L-glutamate + ATP = L-glutamyl-tRNA(Glu) + AMP + diphosphate. Catalyzes the attachment of glutamate to tRNA(Glu) in a two-step reaction: glutamate is first activated by ATP to form Glu-AMP and then transferred to the acceptor end of tRNA(Glu). The polypeptide is Glutamate--tRNA ligase 1 (Methylococcus capsulatus (strain ATCC 33009 / NCIMB 11132 / Bath)).